The following is a 450-amino-acid chain: Chromosomal replication initiator protein DnaA (450 aa).

A domain I, interacts with DnaA modulators region spans residues 1-76 (MNLNDILKEL…KKILKQPVNI (76 aa)). The domain II stretch occupies residues 76 to 107 (ISFTYEQEYQKQLEKTESINKDHSDIISKKNK). The tract at residues 108–327 (KVNENTFENF…GSVSRLNFWS (220 aa)) is domain III, AAA+ region. ATP contacts are provided by G151, G153, K154, and T155. Positions 328–450 (QQNPEEKVIT…DILKNKILTK (123 aa)) are domain IV, binds dsDNA.

This sequence belongs to the DnaA family. As to quaternary structure, oligomerizes as a right-handed, spiral filament on DNA at oriC.

The protein resides in the cytoplasm. The protein localises to the cell membrane. Its function is as follows. Plays an essential role in the initiation and regulation of chromosomal replication. ATP-DnaA binds to the origin of replication (oriC) to initiate formation of the DNA replication initiation complex once per cell cycle. Binds the DnaA box (a 9 base pair repeat at the origin) and separates the double-stranded (ds)DNA. Forms a right-handed helical filament on oriC DNA; dsDNA binds to the exterior of the filament while single-stranded (ss)DNA is stabiized in the filament's interior. The ATP-DnaA-oriC complex binds and stabilizes one strand of the AT-rich DNA unwinding element (DUE), permitting loading of DNA polymerase. After initiation quickly degrades to an ADP-DnaA complex that is not apt for DNA replication. Binds acidic phospholipids. This Mycoplasma capricolum subsp. capricolum (strain California kid / ATCC 27343 / NCTC 10154) protein is Chromosomal replication initiator protein DnaA.